The following is a 215-amino-acid chain: Histidine biosynthesis bifunctional protein HisIE (215 aa).

Residues 1 to 126 (MSHSDLPLAN…GHKSPPPADM (126 aa)) form a phosphoribosyl-AMP cyclohydrolase region. The interval 127–215 (LTELARVIGD…VYRKLGDRRR (89 aa)) is phosphoribosyl-ATP pyrophosphohydrolase.

It in the N-terminal section; belongs to the PRA-CH family. In the C-terminal section; belongs to the PRA-PH family.

The protein resides in the cytoplasm. The enzyme catalyses 1-(5-phospho-beta-D-ribosyl)-ATP + H2O = 1-(5-phospho-beta-D-ribosyl)-5'-AMP + diphosphate + H(+). It catalyses the reaction 1-(5-phospho-beta-D-ribosyl)-5'-AMP + H2O = 1-(5-phospho-beta-D-ribosyl)-5-[(5-phospho-beta-D-ribosylamino)methylideneamino]imidazole-4-carboxamide. Its pathway is amino-acid biosynthesis; L-histidine biosynthesis; L-histidine from 5-phospho-alpha-D-ribose 1-diphosphate: step 2/9. It participates in amino-acid biosynthesis; L-histidine biosynthesis; L-histidine from 5-phospho-alpha-D-ribose 1-diphosphate: step 3/9. The protein is Histidine biosynthesis bifunctional protein HisIE (hisI) of Synechocystis sp. (strain ATCC 27184 / PCC 6803 / Kazusa).